We begin with the raw amino-acid sequence, 441 residues long: Ribosomal protein uS12 methylthiotransferase RimO (441 aa).

The MTTase N-terminal domain maps to 8–118 (PKIGFVSLGC…VLEHVHHYSP (111 aa)). [4Fe-4S] cluster is bound by residues cysteine 17, cysteine 53, cysteine 82, cysteine 150, cysteine 154, and cysteine 157. A Radical SAM core domain is found at 136 to 373 (LTPRHYAYLK…MQLQQQISAE (238 aa)). In terms of domain architecture, TRAM spans 376–441 (QEKVGREILV…DEYDLWGTRV (66 aa)).

The protein belongs to the methylthiotransferase family. RimO subfamily. It depends on [4Fe-4S] cluster as a cofactor.

The protein localises to the cytoplasm. The enzyme catalyses L-aspartate(89)-[ribosomal protein uS12]-hydrogen + (sulfur carrier)-SH + AH2 + 2 S-adenosyl-L-methionine = 3-methylsulfanyl-L-aspartate(89)-[ribosomal protein uS12]-hydrogen + (sulfur carrier)-H + 5'-deoxyadenosine + L-methionine + A + S-adenosyl-L-homocysteine + 2 H(+). In terms of biological role, catalyzes the methylthiolation of an aspartic acid residue of ribosomal protein uS12. In Klebsiella pneumoniae (strain 342), this protein is Ribosomal protein uS12 methylthiotransferase RimO.